A 187-amino-acid polypeptide reads, in one-letter code: Sliding-clamp-loader small subunit (187 aa).

It belongs to the Tevenvirinae sliding-clamp-loader small subunit family. The sliding-clamp-loader consists of 4 large subunits and 1 small subunit. Interacts with the sliding clamp; this interaction allows the sliding-clamp-loader to open the sliding clamp. Part of the replicase complex that includes the DNA polymerase, the polymerase clamp, the clamp loader complex, the single-stranded DNA binding protein, the primase, the helicase and the helicase assembly factor.

Functionally, forms the sliding-clamp-loader together with the small subunit. The clamp loader holds the clamp in an open conformation and places it onto the DNA. The polypeptide is Sliding-clamp-loader small subunit (62) (Escherichia coli (Bacteriophage T4)).